The primary structure comprises 64 residues: MYKQIFLCLIIAALCATIMAEASAFADADEDDDKRYVRGMASKAGAIAGKIAKVALKALGRRDS.

The first 20 residues, 1 to 20, serve as a signal peptide directing secretion; the sequence is MYKQIFLCLIIAALCATIMA. The propeptide occupies 21–35; the sequence is EASAFADADEDDDKR. At leucine 59 the chain carries Leucine amide. A propeptide spanning residues 60-64 is cleaved from the precursor; the sequence is GRRDS.

Belongs to the gastrin/cholecystokinin family. Magainin subfamily. As to expression, expressed by the skin glands. Synthesized in the stomach and stored in a novel granular multinucleated cell in the gastric mucosa. Stored as active, processed peptides in large granules within the granular gland secretions of the skin.

It is found in the secreted. PGLa and PGLa-H display a broad-spectrum of antibacterial activity against a range of Gram-positive and Gram-negative bacteria. PGLa also displays antifungal activity against C.albicans ATCC 14053. PGLa-H shows moderate antibacterial activity against the multidrug-resistant methicillin-resistant S.aureus (MRSA) but exhibits very little hemolytic activity. This chain is PYLa/PGLa A (pgla-a), found in Xenopus laevis (African clawed frog).